The chain runs to 358 residues: UDP-N-acetylglucosamine--N-acetylmuramyl-(pentapeptide) pyrophosphoryl-undecaprenol N-acetylglucosamine transferase (358 aa).

UDP-N-acetyl-alpha-D-glucosamine-binding positions include 10 to 12 (TGG), asparagine 124, serine 196, and glutamine 293.

This sequence belongs to the glycosyltransferase 28 family. MurG subfamily.

The protein localises to the cell membrane. It catalyses the reaction di-trans,octa-cis-undecaprenyl diphospho-N-acetyl-alpha-D-muramoyl-L-alanyl-D-glutamyl-meso-2,6-diaminopimeloyl-D-alanyl-D-alanine + UDP-N-acetyl-alpha-D-glucosamine = di-trans,octa-cis-undecaprenyl diphospho-[N-acetyl-alpha-D-glucosaminyl-(1-&gt;4)]-N-acetyl-alpha-D-muramoyl-L-alanyl-D-glutamyl-meso-2,6-diaminopimeloyl-D-alanyl-D-alanine + UDP + H(+). Its pathway is cell wall biogenesis; peptidoglycan biosynthesis. Its function is as follows. Cell wall formation. Catalyzes the transfer of a GlcNAc subunit on undecaprenyl-pyrophosphoryl-MurNAc-pentapeptide (lipid intermediate I) to form undecaprenyl-pyrophosphoryl-MurNAc-(pentapeptide)GlcNAc (lipid intermediate II). The protein is UDP-N-acetylglucosamine--N-acetylmuramyl-(pentapeptide) pyrophosphoryl-undecaprenol N-acetylglucosamine transferase of Exiguobacterium sp. (strain ATCC BAA-1283 / AT1b).